Reading from the N-terminus, the 821-residue chain is Phenylalanine--tRNA ligase beta subunit (821 aa).

The 111-residue stretch at 39–149 (RTWAEGVVVG…DAVTVGEDVR (111 aa)) folds into the tRNA-binding domain. The B5 domain maps to 409-503 (PLERTLTLRL…RLYGYDRFEE (95 aa)). Mg(2+)-binding residues include D481, D487, E490, and E491. The FDX-ACB domain maps to 724–820 (STYPASDRDL…LVEKYAVTLR (97 aa)).

Belongs to the phenylalanyl-tRNA synthetase beta subunit family. Type 1 subfamily. As to quaternary structure, tetramer of two alpha and two beta subunits. Mg(2+) serves as cofactor.

The protein localises to the cytoplasm. The catalysed reaction is tRNA(Phe) + L-phenylalanine + ATP = L-phenylalanyl-tRNA(Phe) + AMP + diphosphate + H(+). This is Phenylalanine--tRNA ligase beta subunit from Thermosynechococcus vestitus (strain NIES-2133 / IAM M-273 / BP-1).